The chain runs to 95 residues: Aspartyl/glutamyl-tRNA(Asn/Gln) amidotransferase subunit C (95 aa).

It belongs to the GatC family. Heterotrimer of A, B and C subunits.

The enzyme catalyses L-glutamyl-tRNA(Gln) + L-glutamine + ATP + H2O = L-glutaminyl-tRNA(Gln) + L-glutamate + ADP + phosphate + H(+). The catalysed reaction is L-aspartyl-tRNA(Asn) + L-glutamine + ATP + H2O = L-asparaginyl-tRNA(Asn) + L-glutamate + ADP + phosphate + 2 H(+). In terms of biological role, allows the formation of correctly charged Asn-tRNA(Asn) or Gln-tRNA(Gln) through the transamidation of misacylated Asp-tRNA(Asn) or Glu-tRNA(Gln) in organisms which lack either or both of asparaginyl-tRNA or glutaminyl-tRNA synthetases. The reaction takes place in the presence of glutamine and ATP through an activated phospho-Asp-tRNA(Asn) or phospho-Glu-tRNA(Gln). This is Aspartyl/glutamyl-tRNA(Asn/Gln) amidotransferase subunit C from Campylobacter curvus (strain 525.92).